The following is a 406-amino-acid chain: Dihydroorotase, mitochondrial (406 aa).

A mitochondrion-targeting transit peptide spans Met1 to Lys41. Positions 69, 71, 155, 193, 231, and 305 each coordinate Zn(2+). Lys155 is modified (N6-carboxylysine).

Belongs to the metallo-dependent hydrolases superfamily. DHOase family. Class II DHOase subfamily. Requires Zn(2+) as cofactor.

The protein localises to the mitochondrion. It carries out the reaction (S)-dihydroorotate + H2O = N-carbamoyl-L-aspartate + H(+). It functions in the pathway pyrimidine metabolism; UMP biosynthesis via de novo pathway; (S)-dihydroorotate from bicarbonate: step 3/3. The polypeptide is Dihydroorotase, mitochondrial (PYRC) (Oryza sativa subsp. japonica (Rice)).